A 508-amino-acid chain; its full sequence is DNA polymerase II small subunit (508 aa).

The segment covering 66–80 (ASSAAQTSAPASTPP) has biased composition (low complexity). The tract at residues 66–122 (ASSAAQTSAPASTPPDEATTHTDPSATDTPPNHDGGRAATADARSVEIDGDMTGAST) is disordered. Residues 86–95 (HTDPSATDTP) are compositionally biased toward polar residues.

It belongs to the DNA polymerase delta/II small subunit family. In terms of assembly, heterodimer of a large subunit and a small subunit.

The catalysed reaction is DNA(n) + a 2'-deoxyribonucleoside 5'-triphosphate = DNA(n+1) + diphosphate. It carries out the reaction Exonucleolytic cleavage in the 3'- to 5'-direction to yield nucleoside 5'-phosphates.. Possesses two activities: a DNA synthesis (polymerase) and an exonucleolytic activity that degrades single-stranded DNA in the 3' to 5' direction. Has a template-primer preference which is characteristic of a replicative DNA polymerase. In Halobacterium salinarum (strain ATCC 29341 / DSM 671 / R1), this protein is DNA polymerase II small subunit.